A 146-amino-acid polypeptide reads, in one-letter code: 3-hydroxyacyl-[acyl-carrier-protein] dehydratase FabZ (146 aa).

Residue H49 is part of the active site.

It belongs to the thioester dehydratase family. FabZ subfamily.

It localises to the cytoplasm. It catalyses the reaction a (3R)-hydroxyacyl-[ACP] = a (2E)-enoyl-[ACP] + H2O. Functionally, involved in unsaturated fatty acids biosynthesis. Catalyzes the dehydration of short chain beta-hydroxyacyl-ACPs and long chain saturated and unsaturated beta-hydroxyacyl-ACPs. The polypeptide is 3-hydroxyacyl-[acyl-carrier-protein] dehydratase FabZ (Pseudomonas fluorescens (strain Pf0-1)).